Here is a 344-residue protein sequence, read N- to C-terminus: Serine/arginine-rich splicing factor 6 (344 aa).

In terms of domain architecture, RRM 1 spans 1 to 72 (MPRVYIGRLS…ERVIVEHARG (72 aa)). Phosphoserine occurs at positions 45, 81, and 84. The segment at 75–103 (RDRDGYSYGSRSGGGGYSSRRTSGRDKYG) is disordered. Residues 110-183 (YRLIVENLSS…RNIRLIEDKP (74 aa)) enclose the RRM 2 domain. Lysine 165 carries the N6-acetyllysine modification. Positions 176–344 (IRLIEDKPRT…RSRSRSSSRD (169 aa)) are disordered. Residue lysine 182 forms a Glycyl lysine isopeptide (Lys-Gly) (interchain with G-Cter in SUMO2) linkage. The segment covering 185–250 (TSHRRSYSGS…RKSRSKSKSK (66 aa)) has biased composition (basic residues). Composition is skewed to basic and acidic residues over residues 264 to 273 (RSKDEYEKSR) and 280 to 291 (SPKENGKGDIKS). Serine 297 and serine 299 each carry phosphoserine. The residue at position 303 (serine 303) is a Phosphoserine; by DYRK1A. Serine 314 and serine 316 each carry phosphoserine. The span at 322–344 (ATSRSRSRSRSKSRSRSRSSSRD) shows a compositional bias: basic residues.

This sequence belongs to the splicing factor SR family. In terms of assembly, binds SREK1/SFRS12. Interacts with DYRK1A. Post-translationally, extensively phosphorylated on serine residues in the RS domain. Phosphorylated by DYRK1A, probably in the RS domain. Phosphorylation by DYRK1A modulates alternative splice site selection and inhibits the expression of MAPT/Tau exon 10.

It localises to the nucleus. Its subcellular location is the nucleus speckle. Plays a role in constitutive splicing and modulates the selection of alternative splice sites. Plays a role in the alternative splicing of MAPT/Tau exon 10. Binds to alternative exons of TNC pre-mRNA and promotes the expression of alternatively spliced TNC. Plays a role in wound healing and in the regulation of keratinocyte differentiation and proliferation via its role in alternative splicing. In Homo sapiens (Human), this protein is Serine/arginine-rich splicing factor 6 (SRSF6).